The primary structure comprises 173 residues: Protein GrpE (173 aa).

A compositionally biased stretch (basic and acidic residues) spans 1-28 (MTEEEKTKSEAEEIEQNNKEEEQEKSVE). A disordered region spans residues 1–30 (MTEEEKTKSEAEEIEQNNKEEEQEKSVEEL).

Belongs to the GrpE family. As to quaternary structure, homodimer.

It is found in the cytoplasm. In terms of biological role, participates actively in the response to hyperosmotic and heat shock by preventing the aggregation of stress-denatured proteins, in association with DnaK and GrpE. It is the nucleotide exchange factor for DnaK and may function as a thermosensor. Unfolded proteins bind initially to DnaJ; upon interaction with the DnaJ-bound protein, DnaK hydrolyzes its bound ATP, resulting in the formation of a stable complex. GrpE releases ADP from DnaK; ATP binding to DnaK triggers the release of the substrate protein, thus completing the reaction cycle. Several rounds of ATP-dependent interactions between DnaJ, DnaK and GrpE are required for fully efficient folding. This Methanosphaera stadtmanae (strain ATCC 43021 / DSM 3091 / JCM 11832 / MCB-3) protein is Protein GrpE.